We begin with the raw amino-acid sequence, 490 residues long: 5'-3' exonuclease PLD3 (490 aa).

The Cytoplasmic portion of the chain corresponds to 1-38 (MKPKLMYQELKVPAEEPANELPMNEIEAWKAAEKKARW). The chain crosses the membrane as a helical; Signal-anchor for type II membrane protein span at residues 39–59 (VLLVLILAVVGFGALMTQLFL). Topologically, residues 60 to 490 (WEYGDLHLFG…DSVGNACRLL (431 aa)) are lumenal. Cystine bridges form between Cys-77-Cys-239 and Cys-81-Cys-237. Residues Asn-97 and Asn-132 are each glycosylated (N-linked (GlcNAc...) asparagine). Positions 196-223 (THGVLHTKFWVVDQTHFYLGSANMDWRS) constitute a PLD phosphodiesterase 1 domain. Active-site residues include His-201, Lys-203, and Asp-208. Catalysis depends on His-201, which acts as the Proton donor. Phosphate is bound by residues His-201 and Lys-203. Phosphate is bound at residue Asn-218. N-linked (GlcNAc...) asparagine glycans are attached at residues Asn-236, Asn-284, and Asn-387. A disulfide bridge connects residues Cys-366 and Cys-487. Positions 411–437 (YARVNHNKYMVTERATYIGTSNWSGNY) constitute a PLD phosphodiesterase 2 domain. Residue His-416 coordinates phosphate. Residue His-416 is the Nucleophile of the active site. A Mg(2+)-binding site is contributed by Phe-438.

This sequence belongs to the phospholipase D family. As to quaternary structure, homodimer. Interacts with APP. Post-translationally, N-glycosylated. In terms of processing, proteolytically processed to a soluble active form that is stable within endosomes and lysosomes. During transport through the secretory pathway becomes proteolysed by cysteine proteases, thereby releasing a stable soluble lysosomal lumenal polypeptide, whereas the transmembrane-bound fragment is rapidly degraded. Its transport route to lysosomes involves ubiquitination and the ESCRT complex. Ubiquitinated at N-terminus. Ubiquitination mediates sorting into lysosomes. Widely expressed. In the brain, high levels of expression are detected in the frontal, temporal and occipital cortices and hippocampus. Expressed at low level in corpus callosum. Expressed in plasmacytoid dendritic cells and monocytes (at protein level).

It localises to the endoplasmic reticulum membrane. The protein resides in the lysosome lumen. Its subcellular location is the early endosome membrane. It is found in the late endosome membrane. The protein localises to the golgi apparatus membrane. It localises to the endosome membrane. It carries out the reaction Exonucleolytic cleavage in the 5'- to 3'-direction to yield nucleoside 3'-phosphates.. The catalysed reaction is a 5'-end 5'-dephospho-ribonucleotidyl-ribonucleotide-RNA + H2O = a ribonucleoside 3'-phosphate + a 5'-end dephospho-ribonucleoside-RNA + H(+). It catalyses the reaction a ribonucleoside 3'-phosphate-2'-3'-cyclophospho-GMP + H2O = a ribonucleoside 3'-phosphate + 2',3'-cyclophospho-GMP + H(+). The enzyme catalyses a 5'-end 5'-dephospho-2'-deoxyribonucleotidyl-2'-deoxyribonucleotide in single-stranded DNA + H2O = a 5'-end dephospho-2'-deoxyribonucleoside in single-stranded DNA + a 2'-deoxyribonucleoside 3'-phosphate + H(+). It carries out the reaction a 5'-end 5'-phospho-2'-deoxyribonucleotide in single-stranded DNA + H2O = a 5'-end 5'-dephospho-2'-deoxyribonucleotide in single-stranded DNA + phosphate. The catalysed reaction is a 3-lyso-sn-glycero-1-phospho-(3'-acyl-1'-sn-glycerol) + a 1-acyl-sn-glycerol = a 3-acyl-sn-glycero-1-phospho-(3'-acyl-1'-sn-glycerol) + glycerol. It catalyses the reaction 3-lyso-sn-glycero-1-phospho-(3'-(9Z-octadecenoyl)-1'-sn-glycerol) + 1-(9Z-octadecenoyl)-sn-glycerol = 3-(9Z-octadecenoyl)-sn-glycero-1-phospho-(3'-(9Z-octadecenoyl)-1'-sn-glycerol) + glycerol. With respect to regulation, the exonuclease activity toward ssDNA substrate is Ca(2+) and Mg(2+)-independent, but it is inhibited by Fe(2+), Cu(2+) and to a lesser extent Zn(2+) ions. Functionally, 5'-&gt;3' exonuclease that hydrolyzes the phosphodiester bond of single-stranded DNA (ssDNA) and RNA molecules to form nucleoside 3'-monophosphates and 5'-end 5'-hydroxy deoxyribonucleotide/ribonucleotide fragments. Partially redundant with PLD4, can cleave all four nucleotides displaying higher efficiency for ssDNA and RNA fragments initiated with uridine and guanosine residues and lower efficiency for cytidine-initiated substrates. As a result, it does not always degrade polynucleotides to the single nucleotide level, it can stall at specific sites sparing certain fragments from exonucleolytic degradation. Processes self and pathogenic ssDNA and RNA molecules that reach the endolysosomal compartment via phagocytosis or autophagy and may serve as 'danger' signals for recognition by innate immune receptors such as toll-like receptors (TLRs). Degrades mitochondrial CpG-rich ssDNA fragments to prevent TLR9 activation and autoinflammatory response, but it can cleave viral RNA to generate ligands for TLR7 activation and initiate antiviral immune responses. In plasmacytoid dendritic cells, it cooperates with endonuclease RNASET2 to release 2',3'-cyclic guanosine monophosphate (2',3'-cGMP), a potent stimulatory ligand for TLR7. Produces 2',3'-cGMPs and cytidine-rich RNA fragments that occupy TLR7 ligand-binding pockets and trigger a signaling-competent state. Can exert polynucleotide phosphatase activity toward 5'-phosphorylated ssDNA substrates although at a slow rate. Transphosphatidylase that catalyzes the exchange with R to S stereo-inversion of the glycerol moiety between (S,R)-lysophosphatidylglycerol (LPG) and monoacylglycerol (MAG) substrates to yield (S,S)-bis(monoacylglycero)phosphate (BMP). Can synthesize a variety of (S,S)-BMPs representing the main phospholipid constituent of lysosomal intralumenal vesicle (ILV) membranes that bind acid hydrolases for lipid degradation. Regulates the homeostasis and interorganellar communication of the endolysosomal system with an overall impact on cellular removal of dysfunctional organelles via autophagy as well as proper protein and lipid turnover. May play a role in myotube formation in response to ER stress. The protein is 5'-3' exonuclease PLD3 of Homo sapiens (Human).